Consider the following 293-residue polypeptide: Ribonuclease HIII (293 aa).

The RNase H type-2 domain occupies 78-293 (LPLIGTDEVG…TEKAKKRLER (216 aa)). The a divalent metal cation site is built by aspartate 84, glutamate 85, and aspartate 187.

The protein belongs to the RNase HII family. RnhC subfamily. Mn(2+) serves as cofactor. Requires Mg(2+) as cofactor.

The protein localises to the cytoplasm. The catalysed reaction is Endonucleolytic cleavage to 5'-phosphomonoester.. Functionally, endonuclease that specifically degrades the RNA of RNA-DNA hybrids. This chain is Ribonuclease HIII, found in Streptococcus pneumoniae (strain Taiwan19F-14).